The chain runs to 103 residues: Glutaredoxin-C11 (103 aa).

The Glutaredoxin domain maps to M1–W102. A disulfide bridge connects residues C21 and C24.

It belongs to the glutaredoxin family. CC-type subfamily.

Its subcellular location is the cytoplasm. Has a glutathione-disulfide oxidoreductase activity in the presence of NADPH and glutathione reductase. Reduces low molecular weight disulfides and proteins. The sequence is that of Glutaredoxin-C11 (GRXC11) from Arabidopsis thaliana (Mouse-ear cress).